A 66-amino-acid chain; its full sequence is Large ribosomal subunit protein bL31 (66 aa).

Zn(2+) is bound by residues Cys16, Cys18, Cys36, and Cys39.

This sequence belongs to the bacterial ribosomal protein bL31 family. Type A subfamily. As to quaternary structure, part of the 50S ribosomal subunit. It depends on Zn(2+) as a cofactor.

Its function is as follows. Binds the 23S rRNA. This chain is Large ribosomal subunit protein bL31, found in Campylobacter lari (strain RM2100 / D67 / ATCC BAA-1060).